Here is a 673-residue protein sequence, read N- to C-terminus: Protein transport Sec1a (673 aa).

Residues 538 to 591 (SSHKEESEARTGSVRKSSAPTAVPERKATPHSMRSRRTATWARPHSSDDGYSSD) are disordered.

This sequence belongs to the STXBP/unc-18/SEC1 family. Does not bind the syntaxin KNOLLE.

In terms of biological role, involved in the vesicle trafficking. Binds syntaxins. This Arabidopsis thaliana (Mouse-ear cress) protein is Protein transport Sec1a (SEC1A).